The primary structure comprises 248 residues: Type II secretion system protein N (248 aa).

Over 1 to 6 the chain is Cytoplasmic; that stretch reads MKLKSG. Residues 7-27 form a helical; Signal-anchor for type II membrane protein membrane-spanning segment; that stretch reads IVTGVALVLAYGLFLASYAPA. At 28 to 248 the chain is on the periplasmic side; it reads RLLTAVPLPA…RTLNFQGRLL (221 aa).

The protein belongs to the GSP N family.

The protein localises to the cell inner membrane. Functionally, involved in a type II secretion system (T2SS, formerly general secretion pathway, GSP) for the export of proteins. Required for the translocation of the multiple pectic enzymes. This Pectobacterium carotovorum subsp. carotovorum (Erwinia carotovora subsp. carotovora) protein is Type II secretion system protein N (outN).